A 78-amino-acid polypeptide reads, in one-letter code: UPF0612 protein new22 (78 aa).

It belongs to the UPF0612 family.

The protein is UPF0612 protein new22 (new22) of Schizosaccharomyces pombe (strain 972 / ATCC 24843) (Fission yeast).